The following is a 159-amino-acid chain: Lipoprotein signal peptidase (159 aa).

2 helical membrane passes run 64 to 84 (SVQW…IWVV) and 89 to 109 (PPFW…GNGI). Residues Asp119 and Asp135 contribute to the active site. The chain crosses the membrane as a helical span at residues 130–150 (IFNPADIAINLAVLCFLVDLW).

Belongs to the peptidase A8 family.

The protein localises to the cell inner membrane. The catalysed reaction is Release of signal peptides from bacterial membrane prolipoproteins. Hydrolyzes -Xaa-Yaa-Zaa-|-(S,diacylglyceryl)Cys-, in which Xaa is hydrophobic (preferably Leu), and Yaa (Ala or Ser) and Zaa (Gly or Ala) have small, neutral side chains.. The protein operates within protein modification; lipoprotein biosynthesis (signal peptide cleavage). This protein specifically catalyzes the removal of signal peptides from prolipoproteins. This chain is Lipoprotein signal peptidase, found in Parasynechococcus marenigrum (strain WH8102).